A 281-amino-acid polypeptide reads, in one-letter code: 3-methyl-2-oxobutanoate hydroxymethyltransferase (281 aa).

Positions 1–20 are disordered; it reads MSEQTIYGANTPGGSGPRTK. 2 residues coordinate Mg(2+): D62 and D101. Residues 62–63, D101, and K131 contribute to the 3-methyl-2-oxobutanoate site; that span reads DS. E133 provides a ligand contact to Mg(2+). E199 (proton acceptor) is an active-site residue.

Belongs to the PanB family. Homodecamer; pentamer of dimers. Requires Mg(2+) as cofactor.

The protein resides in the cytoplasm. The catalysed reaction is 3-methyl-2-oxobutanoate + (6R)-5,10-methylene-5,6,7,8-tetrahydrofolate + H2O = 2-dehydropantoate + (6S)-5,6,7,8-tetrahydrofolate. The protein operates within cofactor biosynthesis; (R)-pantothenate biosynthesis; (R)-pantoate from 3-methyl-2-oxobutanoate: step 1/2. Catalyzes the reversible reaction in which hydroxymethyl group from 5,10-methylenetetrahydrofolate is transferred onto alpha-ketoisovalerate to form ketopantoate. In Mycobacterium bovis (strain ATCC BAA-935 / AF2122/97), this protein is 3-methyl-2-oxobutanoate hydroxymethyltransferase.